A 440-amino-acid chain; its full sequence is General transcription factor IIE subunit 1 (440 aa).

An N-acetylalanine modification is found at Ala-2. The HTH TFE/IIEalpha-type domain maps to 14 to 104 (LKRLAKYVIR…NYRTLVNVVK (91 aa)). Lys-67 carries the post-translational modification N6-acetyllysine. Positions 129, 132, 154, and 157 each coordinate Zn(2+). Residues 129-157 (CPVCCSTFTDLEANQLFDPMTGTFRCTFC) form a C4-type zinc finger. A Phosphoserine modification is found at Ser-268. Residues 333 to 353 (SSVTAGSVGAAAPVTAANGSD) show a composition bias toward low complexity. The segment at 333–395 (SSVTAGSVGA…EEFEEVADDP (63 aa)) is disordered. 2 stretches are compositionally biased toward acidic residues: residues 354–364 (SESETSESDDD) and 381–393 (EDEE…EVAD).

Belongs to the TFIIE alpha subunit family. As to quaternary structure, tetramer of two alpha and two beta chains. Interacts with TAF6/TAFII80. Interacts with ATF7IP. Interacts with SND1. Part of TBP-based Pol II pre-initiation complex (PIC), in which Pol II core assembles with general transcription factors and other specific initiation factors including GTF2E1, GTF2E2, GTF2F1, GTF2F2, TCEA1, ERCC2, ERCC3, GTF2H2, GTF2H3, GTF2H4, GTF2H5, GTF2A1, GTF2A2, GTF2B and TBP; this large multi-subunit PIC complex mediates DNA unwinding and targets Pol II core to the transcription start site where the first phosphodiester bond forms.

It is found in the nucleus. Recruits TFIIH to the initiation complex and stimulates the RNA polymerase II C-terminal domain kinase and DNA-dependent ATPase activities of TFIIH. Both TFIIH and TFIIE are required for promoter clearance by RNA polymerase. This Mus musculus (Mouse) protein is General transcription factor IIE subunit 1 (Gtf2e1).